The sequence spans 98 residues: Putative pterin-4-alpha-carbinolamine dehydratase (98 aa).

This sequence belongs to the pterin-4-alpha-carbinolamine dehydratase family.

The catalysed reaction is (4aS,6R)-4a-hydroxy-L-erythro-5,6,7,8-tetrahydrobiopterin = (6R)-L-erythro-6,7-dihydrobiopterin + H2O. This chain is Putative pterin-4-alpha-carbinolamine dehydratase, found in Mesorhizobium japonicum (strain LMG 29417 / CECT 9101 / MAFF 303099) (Mesorhizobium loti (strain MAFF 303099)).